A 346-amino-acid polypeptide reads, in one-letter code: 4-hydroxy-2-oxovalerate aldolase (346 aa).

Residues 8–260 enclose the Pyruvate carboxyltransferase domain; it reads VTLHDMSLRD…ETGIDLYKIM (253 aa). 16–17 is a binding site for substrate; that stretch reads RD. Residue Asp17 participates in Mn(2+) binding. The active-site Proton acceptor is the His20. Positions 170 and 199 each coordinate substrate. Mn(2+) is bound by residues His199 and His201. Tyr290 contacts substrate.

This sequence belongs to the 4-hydroxy-2-oxovalerate aldolase family.

The catalysed reaction is (S)-4-hydroxy-2-oxopentanoate = acetaldehyde + pyruvate. In Stutzerimonas stutzeri (Pseudomonas stutzeri), this protein is 4-hydroxy-2-oxovalerate aldolase (nahM).